Here is a 535-residue protein sequence, read N- to C-terminus: Calcium-dependent protein kinase 1 (535 aa).

Positions M1–D34 are disordered. The N-myristoyl glycine moiety is linked to residue G2. C3 carries the S-palmitoyl cysteine lipid modification. The Protein kinase domain maps to Y57–I324. ATP-binding positions include L63–V71 and K86. At S65 the chain carries Phosphoserine. S117 carries the phosphoserine modification. D190 serves as the catalytic Proton acceptor. Residues S216 and S219 each carry the phosphoserine modification. At T230 the chain carries Phosphothreonine. S334 is subject to Phosphoserine. The short motif at N345–S352 is the J domain autoinhibitory motif element. The segment at N345–I363 is j domain. The short motif at Q353–I363 is the J domain interacts with the EF-hand domains element. EF-hand domains lie at E371–F406, N415–L450, F451–F486, and V497–N532. Ca(2+)-binding residues include D384, N386, D388, Q390, E395, D428, D430, N432, Y434, E439, D464, D466, S468, K470, E475, D510, N512, D514, M516, and E521.

It belongs to the protein kinase superfamily. Ser/Thr protein kinase family. CDPK subfamily. Monomer. It depends on Mg(2+) as a cofactor. Post-translationally, myristoylated. Myristoylation and palmitoylation are required for the localization to the parasitophorous vacuole membrane. In terms of processing, palmitoylated. Palmitoylation increases in merozoites in response to low level of extracellular K(+) in the host blood. Myristoylation and palmitoylation are required for the localization to the parasitophorous vacuole membrane. Phosphorylation at Thr-230 may regulate CDPK1 kinase activity. Phosphorylation increases in response to an increase in intracellular Ca(2+) levels. Autophosphorylated in vitro. Autophosphorylation does not affect membrane localization in vitro.

The protein localises to the membrane. It localises to the cell membrane. It is found in the parasitophorous vacuole membrane. Its subcellular location is the cytoplasm. The protein resides in the cell projection. The protein localises to the cilium. It localises to the flagellum. It is found in the host cell membrane. The enzyme catalyses L-seryl-[protein] + ATP = O-phospho-L-seryl-[protein] + ADP + H(+). It catalyses the reaction L-threonyl-[protein] + ATP = O-phospho-L-threonyl-[protein] + ADP + H(+). Activated by calcium. Upon calcium binding to the EF-hand domains, the C-terminus of the junction domain (J domain) undergoes a conformational change which results in the dissociation of the pseudo-substrate inhibitory motif from the catalytic domain. This, in turn may facilitate the autophosphorylation of the activation loop at Thr-230, which leads to the kinase activation. Functionally, calcium-dependent protein kinase which acts as a sensor and effector of intracellular Ca(2+) levels probably in part downstream of cGMP-activated PKG kinase. During the liver stage, involved in sporozoite motility and thus in sporozoite invasion of host hepatocytes, probably together with CDPK4 and CDPK5. In the mosquito midgut and during the last stage of male gamete exflagellation, may play a role in the rupture of the host erythrocyte membrane. In the mosquito midgut, required for the differentiation of the zygote into the ookinete by promoting the translational activation of a subset of repressed mRNAs; these mRNAs are kept repressed in the zygote by the DOZI- or CITH-containing mRNP complexes. Dispensable during the asexual blood stage. The chain is Calcium-dependent protein kinase 1 from Plasmodium yoelii yoelii.